Consider the following 319-residue polypeptide: Ferrochelatase (319 aa).

His-192 and Glu-271 together coordinate Fe cation.

The protein belongs to the ferrochelatase family.

Its subcellular location is the cytoplasm. The catalysed reaction is heme b + 2 H(+) = protoporphyrin IX + Fe(2+). It participates in porphyrin-containing compound metabolism; protoheme biosynthesis; protoheme from protoporphyrin-IX: step 1/1. Catalyzes the ferrous insertion into protoporphyrin IX. The polypeptide is Ferrochelatase (Geotalea uraniireducens (strain Rf4) (Geobacter uraniireducens)).